The chain runs to 146 residues: Mite group 2 allergen Der f 2 (146 aa).

The first 17 residues, 1–17 (MISKILCLSLLVAAVVA), serve as a signal peptide directing secretion. 3 cysteine pairs are disulfide-bonded: Cys-25-Cys-136, Cys-38-Cys-44, and Cys-90-Cys-95.

This sequence belongs to the NPC2 family.

It is found in the secreted. This is Mite group 2 allergen Der f 2 (DERF2) from Dermatophagoides farinae (American house dust mite).